A 318-amino-acid polypeptide reads, in one-letter code: Thymidylate synthase (318 aa).

Residues Arg-25 and 180–181 (RR) each bind dUMP. Cys-200 (nucleophile) is an active-site residue. DUMP is bound by residues 220-223 (RSGD), Asn-231, and 261-263 (HIY). Asp-223 serves as a coordination point for (6R)-5,10-methylene-5,6,7,8-tetrahydrofolate. Ala-317 serves as a coordination point for (6R)-5,10-methylene-5,6,7,8-tetrahydrofolate.

Belongs to the thymidylate synthase family. Bacterial-type ThyA subfamily. In terms of assembly, homodimer.

Its subcellular location is the cytoplasm. It carries out the reaction dUMP + (6R)-5,10-methylene-5,6,7,8-tetrahydrofolate = 7,8-dihydrofolate + dTMP. Its pathway is pyrimidine metabolism; dTTP biosynthesis. Catalyzes the reductive methylation of 2'-deoxyuridine-5'-monophosphate (dUMP) to 2'-deoxythymidine-5'-monophosphate (dTMP) while utilizing 5,10-methylenetetrahydrofolate (mTHF) as the methyl donor and reductant in the reaction, yielding dihydrofolate (DHF) as a by-product. This enzymatic reaction provides an intracellular de novo source of dTMP, an essential precursor for DNA biosynthesis. In Bacillus thuringiensis subsp. konkukian (strain 97-27), this protein is Thymidylate synthase.